Consider the following 160-residue polypeptide: Serine-protein kinase RsbW (160 aa).

The protein belongs to the anti-sigma-factor family.

The catalysed reaction is L-seryl-[protein] + ATP = O-phospho-L-seryl-[protein] + ADP + H(+). The enzyme catalyses L-threonyl-[protein] + ATP = O-phospho-L-threonyl-[protein] + ADP + H(+). Negative regulator of sigma-B activity. Phosphorylates and inactivates its specific antagonist protein, RsbV. Upon phosphorylation of RsbV, RsbW is released and binds to sigma-B, thereby blocking its ability to form an RNA polymerase holoenzyme (E-sigma-B). The polypeptide is Serine-protein kinase RsbW (Bacillus thuringiensis (strain Al Hakam)).